The primary structure comprises 2640 residues: Collagen alpha-5(VI) chain (2640 aa).

The first 18 residues, 1–18 (MKLRLIAFVLILWTETLA), serve as a signal peptide directing secretion. Residues 19–1426 (DQSPGPGPEY…ACCCTFCKCP (1408 aa)) are nonhelical region. VWFA domains lie at 30–209 (DVVF…IKDV), 268–445 (DLIF…LKKI), 474–644 (DIYF…KNEI), 660–829 (DIMF…ESKL), 846–1023 (DIVF…QETL), 1037–1214 (DVIF…VREI), and 1226–1413 (DVVV…LGNI). N-linked (GlcNAc...) asparagine glycans are attached at residues Asn-201, Asn-292, and Asn-614. Collagen-like domains lie at 1426-1478 (PGIP…GCPG), 1474-1524 (VGCP…DPGN), 1557-1614 (GQKG…GPEG), 1632-1689 (GSQG…GIPG), and 1706-1762 (GDPG…AGQP). Positions 1427-1760 (GIPGPHGTRG…GRRGPKGTAG (334 aa)) are triple-helical region. Residues 1435–1761 (RGLQASKGSS…RRGPKGTAGQ (327 aa)) are disordered. Residues 1452-1464 (HRGEDGDPGRRGE) are compositionally biased toward basic and acidic residues. The segment covering 1537–1567 (DGEKGFPGDPGDPGKDSNIKGQKGEKGERGR) has biased composition (basic and acidic residues). Residues 1597–1609 (PSGQAGNPGPQGT) show a composition bias toward polar residues. Over residues 1610–1622 (QGPEGLQGSQGSS) the composition is skewed to low complexity. A Cell attachment site motif is present at residues 1649–1651 (RGD). Residues 1718-1727 (GIPGGPGPKG) show a composition bias toward gly residues. Residues 1740 to 1750 (RSGLQGSQGPP) are compositionally biased toward low complexity. The nonhelical region stretch occupies residues 1761–2640 (QPIYSPCELI…NSKQDGEDAR (880 aa)). 2 consecutive VWFA domains span residues 1790 to 1970 (ELVF…KLRR) and 1996 to 2186 (DVAF…VKFL). 2 short sequence motifs (cell attachment site) span residues 2216–2218 (RGD) and 2259–2261 (RGD). One can recognise a VWFA 10 domain in the interval 2321–2516 (DVAFLIDASQ…PDLDYVIKFI (196 aa)). An N-linked (GlcNAc...) asparagine glycan is attached at Asn-2541. Residues 2617–2640 (DKEEPCSAETPAPVNSKQDGEDAR) are disordered.

The protein belongs to the type VI collagen family. In terms of assembly, trimers composed of three different chains: alpha-1(VI), alpha-2(VI), and alpha-3(VI) or alpha-4(VI) or alpha-5(VI) or alpha-6(VI). In terms of processing, prolines at the third position of the tripeptide repeating unit (G-X-Y) are hydroxylated in some or all of the chains. In newborn, it is expressed in lung, heart, kidney, muscle, brain, intestine, skin, femur, sternum and calvaria. In adult, it is widely expressed and is detected in lung, heart, kidney, spleen, muscle, ovary, uterus, brain, skin, liver and sternum.

It localises to the secreted. It is found in the extracellular space. The protein resides in the extracellular matrix. In terms of biological role, collagen VI acts as a cell-binding protein. In Mus musculus (Mouse), this protein is Collagen alpha-5(VI) chain (Col6a5).